Reading from the N-terminus, the 475-residue chain is Aspartyl/glutamyl-tRNA(Asn/Gln) amidotransferase subunit B (475 aa).

This sequence belongs to the GatB/GatE family. GatB subfamily. In terms of assembly, heterotrimer of A, B and C subunits.

It catalyses the reaction L-glutamyl-tRNA(Gln) + L-glutamine + ATP + H2O = L-glutaminyl-tRNA(Gln) + L-glutamate + ADP + phosphate + H(+). The catalysed reaction is L-aspartyl-tRNA(Asn) + L-glutamine + ATP + H2O = L-asparaginyl-tRNA(Asn) + L-glutamate + ADP + phosphate + 2 H(+). Its function is as follows. Allows the formation of correctly charged Asn-tRNA(Asn) or Gln-tRNA(Gln) through the transamidation of misacylated Asp-tRNA(Asn) or Glu-tRNA(Gln) in organisms which lack either or both of asparaginyl-tRNA or glutaminyl-tRNA synthetases. The reaction takes place in the presence of glutamine and ATP through an activated phospho-Asp-tRNA(Asn) or phospho-Glu-tRNA(Gln). The chain is Aspartyl/glutamyl-tRNA(Asn/Gln) amidotransferase subunit B from Pediococcus pentosaceus (strain ATCC 25745 / CCUG 21536 / LMG 10740 / 183-1w).